The chain runs to 211 residues: Probable nicotinate-nucleotide adenylyltransferase (211 aa).

This sequence belongs to the NadD family.

The catalysed reaction is nicotinate beta-D-ribonucleotide + ATP + H(+) = deamido-NAD(+) + diphosphate. The protein operates within cofactor biosynthesis; NAD(+) biosynthesis; deamido-NAD(+) from nicotinate D-ribonucleotide: step 1/1. In terms of biological role, catalyzes the reversible adenylation of nicotinate mononucleotide (NaMN) to nicotinic acid adenine dinucleotide (NaAD). The chain is Probable nicotinate-nucleotide adenylyltransferase from Legionella pneumophila (strain Paris).